Here is a 461-residue protein sequence, read N- to C-terminus: Steroidogenic factor 1 (461 aa).

Positions 10 to 85 (DELCPVCGDK…VGMRLEAVRA (76 aa)) form a DNA-binding region, nuclear receptor. The segment at 13–33 (CPVCGDKVSGYHYGLLTCESC) adopts an NR C4-type zinc-finger fold. N6-acetyllysine is present on residues lysine 34, lysine 38, and lysine 72. The NR C4-type zinc-finger motif lies at 49 to 73 (CTESQSCKIDKTQRKRCPFCRFQKC). Residues 116-158 (NGFKLETGPPVGVPPPPPPPPDYMLPHGLHASEPKGLASGPPA) form a disordered region. Lysine 119 is covalently cross-linked (Glycyl lysine isopeptide (Lys-Gly) (interchain with G-Cter in SUMO)). The segment covering 126 to 138 (VGVPPPPPPPPDY) has biased composition (pro residues). Residue lysine 194 forms a Glycyl lysine isopeptide (Lys-Gly) (interchain with G-Cter in SUMO) linkage. Serine 203 is subject to Phosphoserine; by CDK7. The 238-residue stretch at 222 to 459 (GVPELILQLL…NLLIEMLQAK (238 aa)) folds into the NR LBD domain. The important for dimerization stretch occupies residues 230 to 461 (LLQLEPDEDQ…LIEMLQAKQT (232 aa)). Residues glycine 341, tyrosine 436, and lysine 440 each coordinate a 1,2-diacyl-sn-glycero-3-phosphocholine.

Belongs to the nuclear hormone receptor family. NR5 subfamily. Binds DNA as a monomer. Part of a complex consisting of SFPQ, NONO and NR5A1. Interacts with NR0B2. Interacts with DGKQ and CDK7. Binds to and activated by HIPK3. May be regulated by phosphorylation and dephosphorylation. In terms of processing, acetylation stimulates the transcriptional activity. Post-translationally, sumoylation reduces CDK7-mediated phosphorylation on Ser-203. Phosphorylated on Ser-203 by CDK7. This phosphorylation promotes transcriptional activity. In terms of tissue distribution, adrenal, ovary, testis, placenta, adipocyte, and brain.

It localises to the nucleus. Its function is as follows. Transcriptional activator. Seems to be essential for sexual differentiation and formation of the primary steroidogenic tissues. Binds to the Ad4 site found in the promoter region of steroidogenic P450 genes such as CYP11A, CYP11B and CYP21B. Also regulates the AMH/Muellerian inhibiting substance gene as well as the AHCH and STAR genes. 5'-YCAAGGYC-3' and 5'-RRAGGTCA-3' are the consensus sequences for the recognition by NR5A1. The SFPQ-NONO-NR5A1 complex binds to the CYP17 promoter and regulates basal and cAMP-dependent transcriptional activity. Binds phospholipids with a phosphatidylinositol (PI) headgroup, in particular PI(3,4)P2 and PI(3,4,5)P3. Activated by the phosphorylation of NR5A1 by HIPK3 leading to increased steroidogenic gene expression upon cAMP signaling pathway stimulation. This Bos taurus (Bovine) protein is Steroidogenic factor 1 (NR5A1).